The primary structure comprises 827 residues: Ribosome biogenesis protein ERB1 (827 aa).

Positions 1–129 are disordered; sequence MVHSKKDKSV…DFSDDNDTRP (129 aa). A compositionally biased stretch (basic and acidic residues) spans 7–18; sequence DKSVMKHSDIKK. The span at 45 to 60 shows a compositional bias: acidic residues; it reads CDSDDDEEFQSAEEEV. Over residues 61 to 77 the composition is skewed to low complexity; the sequence is LSSGSESSSKEGSTPGS. Acidic residues-rich tracts occupy residues 81–99 and 108–124; these read GSDEEAEDEDADEEEDEDA and EEGDSEGEYGSEDFSDD. Residues 291–409 form a required for interaction with NOP7 region; sequence RFVPSKHEAK…LRKVPGYGES (119 aa). The tract at residues 409 to 445 is required for interaction with YTM1; the sequence is SVRERFERSLDLYLAPRVRKNKLNIDPESLIPELPSP. WD repeat units lie at residues 461 to 500, 509 to 549, 657 to 695, 698 to 737, 741 to 780, and 796 to 827; these read GHKGKIRTLSIDPSGLWLATGSDDGTVRVWEILTGREVYK, NQDD…FEVE, KSKGIIMDAKFHPFKPQLFVCSQRYIRIYDLSQQVLVKK, PGARWLSTIDIHPRGDNLIASSFDKRVLWHDLDLAATPYK, YHEKAVRSVGFHKKLPLFCSAADDGTIHVFHGTVYDDMMK, and VNSLGVLDTVWHPREAWLFSAGADNTARLWTT.

The protein belongs to the WD repeat BOP1/ERB1 family. In terms of assembly, component of the NOP7 complex, composed of ERB1, NOP7 and YTM1. The complex is held together by ERB1, which interacts with NOP7 via its N-terminal domain and with YTM1 via a high-affinity interaction between the seven-bladed beta-propeller domains of the 2 proteins. The NOP7 complex associates with the 66S pre-ribosome.

The protein localises to the nucleus. Its subcellular location is the nucleolus. It localises to the nucleoplasm. Component of the NOP7 complex, which is required for maturation of the 25S and 5.8S ribosomal RNAs and formation of the 60S ribosome. This is Ribosome biogenesis protein ERB1 from Eremothecium gossypii (strain ATCC 10895 / CBS 109.51 / FGSC 9923 / NRRL Y-1056) (Yeast).